A 728-amino-acid chain; its full sequence is Myb-related protein A (728 aa).

Positions 1–31 are disordered; it reads MAGRARSEDEEEDGQFTEHDYDVSLQKGPKK. 3 HTH myb-type domains span residues 30–80, 81–136, and 137–187; these read KKPW…HKVL, SPEL…NPDV, and KKSS…KRKV. 3 DNA-binding regions (H-T-H motif) span residues 57–80, 109–132, and 160–183; these read WGVVARHFINRSEVQCQHRWHKVL, WSIIAKHLKGRIGKQCRERWHNHL, and WAEIAKLLPGRTDNSIKNHWNSTM. The transcriptional activation domain stretch occupies residues 230-293; it reads IPRYSSLSHD…RKRVPSGSSL (64 aa). The segment at 296 to 534 is negative regulatory domain; the sequence is SESYHMGESM…IRRSLMAVTP (239 aa).

As to quaternary structure, component of the DREAM complex.

It is found in the nucleus. Its function is as follows. Transcription factor that specifically recognizes the sequence 5'-YAAC[GT]G-3'. Acts as a master regulator of male meiosis by promoting expression of piRNAs. The piRNA metabolic process mediates the repression of transposable elements during meiosis by forming complexes composed of piRNAs and Piwi proteins and governs the methylation and subsequent repression of transposons, which is essential for the germline integrity. This is Myb-related protein A (mybl1) from Xenopus laevis (African clawed frog).